A 573-amino-acid polypeptide reads, in one-letter code: MASLFVSTPSSSLTLKSCHSLHLRRFDRAEFSNFGKASVNQTTRSRHSLRCSAEDDRVREPVNEAPSPVALAEEQKEDHDNNNAPPSPESSEEEEEKKSKQQEMDWKTDEEFKKFMGNPSIEAAIKLEKTRTDRKLKELNKESNSENPIIGIYNSLARDSLTKEKERLEKAEETFKALDLNKLKSCFGFDTFFATDVRRFGDGGIFIGNLRKPIDEVTPKLEAKLSEAAGRDVVVWFMEERSNEITKQVCMVQPKAEIDLQFESTRLSTPWGYVSAIALCVTTFGTIALMSGFFLKPDATFDDYIANVVPLFGGFLSILGVSEIATRVTAARHGVKLSPSFLVPSNWTGCLGVMNNYESLLPNKKALFDIPVARTASAYLTSLLLAAAAFISDGSFNGGDNALYIRPQFFDNNPLLSFVQFVVGPYADDLGNVLPNAVEGVGVPVDPLAFAGLLGMVVTSLNLLPCGRLEGGRIAQAMFGRSTAAILSFTTSLLLGIGGLSGSVLCLAWGLFATFFRGGEETPAKDEITPVGDDRFAWGIVLGLICFLTLFPNSGGTFSTSFFNGPFFRGDDF.

The N-terminal 50 residues, 1 to 50 (MASLFVSTPSSSLTLKSCHSLHLRRFDRAEFSNFGKASVNQTTRSRHSLR), are a transit peptide targeting the chloroplast. A disordered region spans residues 38-105 (SVNQTTRSRH…EKKSKQQEMD (68 aa)). Composition is skewed to basic and acidic residues over residues 52-62 (SAEDDRVREPV) and 96-105 (EKKSKQQEMD). Residues 122–185 (EAAIKLEKTR…KALDLNKLKS (64 aa)) are a coiled coil. 7 consecutive transmembrane segments (helical) span residues 274–294 (VSAI…SGFF), 305–325 (IANV…SEIA), 376–396 (ASAY…DGSF), 414–434 (PLLS…GNVL), 441–461 (VGVP…VTSL), 493–513 (LLLG…GLFA), and 536–556 (FAWG…NSGG).

Belongs to the peptidase M50B family.

Its subcellular location is the plastid. The protein resides in the chloroplast membrane. Its function is as follows. Probable membrane-associated metalloprotease that may be involved in chloroplast development. In Arabidopsis thaliana (Mouse-ear cress), this protein is Probable zinc metallopeptidase EGY3, chloroplastic (EGY3).